The following is a 490-amino-acid chain: MDIRSTDTSLLTWTGDTLALGLPEGAIEIAGELAELNDKLGGNLGDLISETEFEGKLGSSAATRLGGGPIRKLILVGLGKTADFDLQTLRLAAAAIARLAKQQKSQALAISLPVVGDQSATAGAITEGLLLATHQDTRFKSTKEEKGAKLETVELLGLGEQASAIAKSEQICSGVILARELVNAPANTVTPLTMAETAEQIAAEYGLSLNILEQEECESLGMGAFLGVAKASDIPPKFLHLIYKPQGTPKRKLAIVGKSLTFDSGGLNIKGAGSGIETMKMDMGGGAATLGAAKAIAQLQPEVEVHFICPATENMISGRAMHPGDILTASNGKTIEVNNTDAEGRLTLADGLVFAEKLEVDAIVDLATLTGACVIALGDDIAGLWSSDESLAAQIQEAAKLAGEKFWPMPLEEKYFEGMKSQIADMKNTGPRPGGSITAALFLKQFINNTPWLHLDIAGPVWSDKENGVNNSGATGFPVRTLVNWVMANN.

2 residues coordinate Mn(2+): lysine 258 and aspartate 263. Lysine 270 is an active-site residue. Aspartate 282, aspartate 341, and glutamate 343 together coordinate Mn(2+). Residue arginine 345 is part of the active site.

Belongs to the peptidase M17 family. Requires Mn(2+) as cofactor.

Its subcellular location is the cytoplasm. The enzyme catalyses Release of an N-terminal amino acid, Xaa-|-Yaa-, in which Xaa is preferably Leu, but may be other amino acids including Pro although not Arg or Lys, and Yaa may be Pro. Amino acid amides and methyl esters are also readily hydrolyzed, but rates on arylamides are exceedingly low.. It carries out the reaction Release of an N-terminal amino acid, preferentially leucine, but not glutamic or aspartic acids.. Its function is as follows. Presumably involved in the processing and regular turnover of intracellular proteins. Catalyzes the removal of unsubstituted N-terminal amino acids from various peptides. This is Probable cytosol aminopeptidase from Microcystis aeruginosa (strain NIES-843 / IAM M-2473).